The sequence spans 308 residues: Olfactory receptor 2D2 (308 aa).

Residues 1–25 (MRQINQTQVTEFLLLGLSDGPHTEQ) lie on the Extracellular side of the membrane. A glycan (N-linked (GlcNAc...) asparagine) is linked at N5. The helical transmembrane segment at 26–49 (LLFIVLLGVYLVTVLGNLLLISLV) threads the bilayer. The Cytoplasmic segment spans residues 50–57 (HVDSQLHT). Residues 58–79 (PMYFFLCNLSLADLCFSTNIVP) form a helical membrane-spanning segment. Topologically, residues 80–100 (QALVHLLSRKKVIAFTLCAAR) are extracellular. A helical transmembrane segment spans residues 101–120 (LLFFLIFGCTQCALLAVMSY). At 121–139 (DRYVAICNPLRYPNIMTWK) the chain is on the cytoplasmic side. Residues 140–158 (VCVQLATGSWTSGILVSVV) form a helical membrane-spanning segment. Residues 159-195 (DTTFILRLPYRGSNSIAHFFCEAPALLILASTDTHAS) lie on the Extracellular side of the membrane. A helical transmembrane segment spans residues 196-219 (EMAIFLMGVVILLIPVFLILVSYG). Over 220 to 236 (RIIVTVVKMKSTVGSLK) the chain is Cytoplasmic. The helical transmembrane segment at 237-259 (AFSTCGSHLMVVILFYGSAIITY) threads the bilayer. The Extracellular segment spans residues 260-270 (MTPKSSKQQEK). Residues 271-290 (SVSVFYAIVTPMLNPLIYSL) form a helical membrane-spanning segment. Residues 291–308 (RNKDVKAALRKVATRNFP) lie on the Cytoplasmic side of the membrane.

Belongs to the G-protein coupled receptor 1 family.

The protein resides in the cell membrane. Functionally, odorant receptor. The chain is Olfactory receptor 2D2 (OR2D2) from Homo sapiens (Human).